Reading from the N-terminus, the 337-residue chain is tRNA-dihydrouridine synthase B (337 aa).

Residues 19–21 (PMA) and glutamine 73 each bind FMN. Catalysis depends on cysteine 103, which acts as the Proton donor. FMN contacts are provided by residues lysine 142, 203 to 205 (NGD), and 227 to 228 (GR).

It belongs to the Dus family. DusB subfamily. FMN serves as cofactor.

The catalysed reaction is a 5,6-dihydrouridine in tRNA + NAD(+) = a uridine in tRNA + NADH + H(+). It carries out the reaction a 5,6-dihydrouridine in tRNA + NADP(+) = a uridine in tRNA + NADPH + H(+). In terms of biological role, catalyzes the synthesis of 5,6-dihydrouridine (D), a modified base found in the D-loop of most tRNAs, via the reduction of the C5-C6 double bond in target uridines. This is tRNA-dihydrouridine synthase B from Pseudomonas putida (strain ATCC 47054 / DSM 6125 / CFBP 8728 / NCIMB 11950 / KT2440).